Here is a 263-residue protein sequence, read N- to C-terminus: Probable endonuclease lcl3 (263 aa).

A disordered region spans residues Met-1–Ser-21. Residues Ser-8–Arg-19 show a composition bias toward basic and acidic residues. A helical membrane pass occupies residues Thr-41–Tyr-59. Residues Arg-80–Gly-240 enclose the TNase-like domain. Residue Arg-131 is part of the active site. Asp-136 contacts Ca(2+). Residues Glu-139 and Arg-179 contribute to the active site. The tract at residues Gly-236–Lys-263 is disordered. Basic and acidic residues predominate over residues Lys-241–Thr-253.

Belongs to the LCL3 family.

It localises to the mitochondrion. The protein resides in the membrane. In Botryotinia fuckeliana (strain B05.10) (Noble rot fungus), this protein is Probable endonuclease lcl3 (lcl3).